The chain runs to 323 residues: Probable cell division protein WhiA (323 aa).

Residues 275–309 constitute a DNA-binding region (H-T-H motif); the sequence is TLKELGEMLTTGQVSKSGINHRLRKLDQIAERLRS.

It belongs to the WhiA family.

In terms of biological role, involved in cell division and chromosome segregation. The protein is Probable cell division protein WhiA of Listeria welshimeri serovar 6b (strain ATCC 35897 / DSM 20650 / CCUG 15529 / CIP 8149 / NCTC 11857 / SLCC 5334 / V8).